Consider the following 181-residue polypeptide: Putative manganese efflux pump MntP (181 aa).

The next 6 helical transmembrane spans lie at 3 to 23 (LIFL…ANGA), 42 to 62 (IFQA…VGFI), 63 to 83 (SYID…KMIK), 101 to 121 (LMLG…TFSF), 124 to 144 (INIA…CVIA), and 160 to 180 (LVLG…THLI).

Belongs to the MntP (TC 9.B.29) family.

It is found in the cell inner membrane. Functionally, probably functions as a manganese efflux pump. In Campylobacter fetus subsp. fetus (strain 82-40), this protein is Putative manganese efflux pump MntP.